We begin with the raw amino-acid sequence, 209 residues long: Shikimate kinase (209 aa).

An ATP-binding site is contributed by 47–52 (GAGKTT). Thr-51 contacts Mg(2+). The substrate site is built by Asp-69, Arg-93, and Gly-115. Residue Arg-153 coordinates ATP. Residue Arg-172 participates in substrate binding.

The protein belongs to the shikimate kinase family. As to quaternary structure, monomer. The cofactor is Mg(2+).

The protein resides in the cytoplasm. It carries out the reaction shikimate + ATP = 3-phosphoshikimate + ADP + H(+). It participates in metabolic intermediate biosynthesis; chorismate biosynthesis; chorismate from D-erythrose 4-phosphate and phosphoenolpyruvate: step 5/7. Its function is as follows. Catalyzes the specific phosphorylation of the 3-hydroxyl group of shikimic acid using ATP as a cosubstrate. The protein is Shikimate kinase of Bordetella avium (strain 197N).